Reading from the N-terminus, the 448-residue chain is 26S proteasome regulatory subunit 4 homolog (448 aa).

Residues methionine 1 to serine 10 are compositionally biased toward polar residues. The segment at methionine 1–threonine 58 is disordered. The span at aspartate 19–tyrosine 31 shows a compositional bias: basic and acidic residues. Glycine 232–threonine 239 lines the ATP pocket.

Belongs to the AAA ATPase family.

It is found in the cytoplasm. The protein resides in the nucleus. Its function is as follows. The 26S proteasome is involved in the ATP-dependent degradation of ubiquitinated proteins. The regulatory (or ATPase) complex confers ATP dependency and substrate specificity to the 26S complex. The protein is 26S proteasome regulatory subunit 4 homolog (mts2) of Schizosaccharomyces pombe (strain 972 / ATCC 24843) (Fission yeast).